The chain runs to 469 residues: GDP-fucose protein O-fucosyltransferase 2 (469 aa).

The N-terminal stretch at 1 to 18 (MKFIIVLLLFFFFKVIDR) is a signal peptide. GDP-beta-L-fucose contacts are provided by residues 56–60 (GEGFN), 277–279 (HLR), and 373–374 (RF). Glu57 serves as the catalytic Proton acceptor.

Belongs to the glycosyltransferase 68 family.

It localises to the endoplasmic reticulum. The enzyme catalyses L-seryl-[protein] + GDP-beta-L-fucose = 3-O-(alpha-L-fucosyl)-L-seryl-[protein] + GDP + H(+). It catalyses the reaction L-threonyl-[protein] + GDP-beta-L-fucose = 3-O-(alpha-L-fucosyl)-L-threonyl-[protein] + GDP + H(+). It participates in protein modification; protein glycosylation. Its function is as follows. Catalyzes the reaction that attaches fucose through an O-glycosidic linkage to a conserved serine or threonine residue in the consensus sequence C1-X-X-S/T-C2 of thrombospondin type I repeats (TSRs) where C1 and C2 are the first and second cysteines of the repeat, respectively. O-fucosylates sporozoite proteins CSP and TRAP. O-fucosylation regulates stability and intracellular trafficking of TRAP but not of CSP. Probably by regulating protein O-fucosylation, may play a role in parasite transmission to the mosquito vector and/or infection of the vertebrate host hepatocytes; however, POFUT2 involvement in transmission/infection is controversial. This Plasmodium falciparum (isolate NF54) protein is GDP-fucose protein O-fucosyltransferase 2.